The following is a 345-amino-acid chain: S-adenosylmethionine:tRNA ribosyltransferase-isomerase (345 aa).

This sequence belongs to the QueA family. In terms of assembly, monomer.

Its subcellular location is the cytoplasm. It carries out the reaction 7-aminomethyl-7-carbaguanosine(34) in tRNA + S-adenosyl-L-methionine = epoxyqueuosine(34) in tRNA + adenine + L-methionine + 2 H(+). It functions in the pathway tRNA modification; tRNA-queuosine biosynthesis. In terms of biological role, transfers and isomerizes the ribose moiety from AdoMet to the 7-aminomethyl group of 7-deazaguanine (preQ1-tRNA) to give epoxyqueuosine (oQ-tRNA). The protein is S-adenosylmethionine:tRNA ribosyltransferase-isomerase of Rhodospirillum rubrum (strain ATCC 11170 / ATH 1.1.1 / DSM 467 / LMG 4362 / NCIMB 8255 / S1).